Reading from the N-terminus, the 84-residue chain is UPF0410 protein YmgE (84 aa).

The next 3 helical transmembrane spans lie at 1 to 21, 27 to 47, and 58 to 78; these read MGIIAWIIFGLIAGIIAKLIM, GGFFLTCILGIVGAVVGGWLA, and GFNLHSFLVAVVGAILVLGVF.

It belongs to the UPF0410 family.

The protein localises to the cell inner membrane. This Escherichia coli O127:H6 (strain E2348/69 / EPEC) protein is UPF0410 protein YmgE (ymgE).